The primary structure comprises 657 residues: Probable alpha-galactosidase D (657 aa).

Residues 1–16 (MLPKIFYLSLLPAALG) form the signal peptide. Asparagine 47 and asparagine 91 each carry an N-linked (GlcNAc...) asparagine glycan. Cysteines 124 and 157 form a disulfide. The active-site Nucleophile is aspartate 155. Residues asparagine 182 and asparagine 191 are each glycosylated (N-linked (GlcNAc...) asparagine). 200–204 (EWGID) provides a ligand contact to substrate. The Proton donor role is filled by aspartate 222. 7 N-linked (GlcNAc...) asparagine glycosylation sites follow: asparagine 291, asparagine 438, asparagine 460, asparagine 505, asparagine 539, asparagine 543, and asparagine 582.

It belongs to the glycosyl hydrolase 27 family.

Its subcellular location is the secreted. The enzyme catalyses Hydrolysis of terminal, non-reducing alpha-D-galactose residues in alpha-D-galactosides, including galactose oligosaccharides, galactomannans and galactolipids.. Its function is as follows. Hydrolyzes a variety of simple alpha-D-galactoside as well as more complex molecules such as oligosaccharides and polysaccharides. This chain is Probable alpha-galactosidase D (aglD), found in Aspergillus oryzae (strain ATCC 42149 / RIB 40) (Yellow koji mold).